The chain runs to 2327 residues: Kielin/chordin-like protein (2327 aa).

An N-terminal signal peptide occupies residues 1 to 19 (MNTLLWTILLPLLFSFCVC). The disordered stretch occupies residues 250 to 294 (LPLPYSLSGERQMEDEEIQREPRAPDLSDTDHYQQQQSEVPAQLL). Over residues 268–281 (QREPRAPDLSDTDH) the composition is skewed to basic and acidic residues. Positions 291–332 (AQLLAKDDRLQRLEEAVKGLTNMIDMIKSQNADLQARVIALE) form a coiled coil. 28 consecutive VWFC domains span residues 339–400 (STCV…SVGP), 401–438 (CMSC…PLCA), 439–493 (TGCS…AKCQ), 494–553 (QGCE…PSCP), 554–610 (VCEL…LDCS), 611–669 (ACEM…SQCQ), 670–728 (SCMD…PMCD), 729–786 (GCLY…PRCE), 787–847 (GCEY…PSCD), 848–907 (VCDF…PVCK), 908–966 (VCVQ…PVCD), 967–1025 (SCSY…AKCP), 1026–1083 (DCRY…NNCN), 1084–1142 (GCNY…PQCP), 1146–1203 (ADCP…RSCD), 1204–1260 (GCLM…KECQ), 1261–1319 (DCQY…PVCD), 1321–1377 (CSYN…CPIC), 1378–1439 (QGCH…DGCN), 1440–1495 (YSGR…PRCT), 1496–1555 (GICK…PVCD), 1556–1614 (RCFY…RECP), 1615–1673 (VCRY…PRCR), 1674–1731 (GCVY…PVCA), 1732–1799 (DCIS…SSCA), 1800–1860 (QALS…PVCN), 1861–1924 (ECVV…HECQ), and 1928–1988 (VSCW…PHCI). Residues 1992–2168 (ATCIAFGDPH…SSNDSSSSCW (177 aa)) enclose the VWFD domain. Disulfide bonds link cysteine 1994–cysteine 2126 and cysteine 2016–cysteine 2167. In terms of domain architecture, TIL spans 2259–2319 (CPHDRGYVFD…ESHCIPPESC (61 aa)).

The protein resides in the secreted. In terms of biological role, may be a signaling molecule that mediates inductive activities of the embryonic midline. Able to dorsalize mesoderm. The sequence is that of Kielin/chordin-like protein (kcp) from Xenopus laevis (African clawed frog).